The primary structure comprises 223 residues: Phosphoribosylformylglycinamidine synthase subunit PurQ (223 aa).

One can recognise a Glutamine amidotransferase type-1 domain in the interval 2-223; the sequence is KFAVLKFPGS…MVNSWREQNV (222 aa). Catalysis depends on cysteine 85, which acts as the Nucleophile. Catalysis depends on residues histidine 193 and glutamate 195.

In terms of assembly, part of the FGAM synthase complex composed of 1 PurL, 1 PurQ and 2 PurS subunits.

It is found in the cytoplasm. It catalyses the reaction N(2)-formyl-N(1)-(5-phospho-beta-D-ribosyl)glycinamide + L-glutamine + ATP + H2O = 2-formamido-N(1)-(5-O-phospho-beta-D-ribosyl)acetamidine + L-glutamate + ADP + phosphate + H(+). It carries out the reaction L-glutamine + H2O = L-glutamate + NH4(+). It participates in purine metabolism; IMP biosynthesis via de novo pathway; 5-amino-1-(5-phospho-D-ribosyl)imidazole from N(2)-formyl-N(1)-(5-phospho-D-ribosyl)glycinamide: step 1/2. Its function is as follows. Part of the phosphoribosylformylglycinamidine synthase complex involved in the purines biosynthetic pathway. Catalyzes the ATP-dependent conversion of formylglycinamide ribonucleotide (FGAR) and glutamine to yield formylglycinamidine ribonucleotide (FGAM) and glutamate. The FGAM synthase complex is composed of three subunits. PurQ produces an ammonia molecule by converting glutamine to glutamate. PurL transfers the ammonia molecule to FGAR to form FGAM in an ATP-dependent manner. PurS interacts with PurQ and PurL and is thought to assist in the transfer of the ammonia molecule from PurQ to PurL. The protein is Phosphoribosylformylglycinamidine synthase subunit PurQ of Staphylococcus saprophyticus subsp. saprophyticus (strain ATCC 15305 / DSM 20229 / NCIMB 8711 / NCTC 7292 / S-41).